The following is a 315-amino-acid chain: Ribosomal large subunit pseudouridine synthase C (315 aa).

The S4 RNA-binding domain occupies 20–94; the sequence is QRIDNFLRNQ…TKLSKVAELE (75 aa). Residue Asp146 is part of the active site.

The protein belongs to the pseudouridine synthase RluA family.

It catalyses the reaction uridine(955/2504/2580) in 23S rRNA = pseudouridine(955/2504/2580) in 23S rRNA. Responsible for synthesis of pseudouridine from uracil at positions 955, 2504 and 2580 in 23S ribosomal RNA. The polypeptide is Ribosomal large subunit pseudouridine synthase C (rluC) (Vibrio cholerae serotype O1 (strain ATCC 39315 / El Tor Inaba N16961)).